Consider the following 112-residue polypeptide: MERLSEQTCEICRVGAPLATAEEIAGFRSQIPDWQILTIDGVQRLSRTYRFRNFAEALEFTNRVGALAETEGHHPAIVTAWGEVTVQWWTHKIKGLHRNDLIMAAKTDALLE.

The protein belongs to the pterin-4-alpha-carbinolamine dehydratase family.

It carries out the reaction (4aS,6R)-4a-hydroxy-L-erythro-5,6,7,8-tetrahydrobiopterin = (6R)-L-erythro-6,7-dihydrobiopterin + H2O. This chain is Putative pterin-4-alpha-carbinolamine dehydratase, found in Syntrophotalea carbinolica (strain DSM 2380 / NBRC 103641 / GraBd1) (Pelobacter carbinolicus).